Reading from the N-terminus, the 242-residue chain is 2-amino-5-formylamino-6-ribosylaminopyrimidin-4(3H)-one 5'-monophosphate deformylase (242 aa).

Fe cation-binding residues include glutamate 46, histidine 48, aspartate 57, and histidine 125.

This sequence belongs to the creatininase superfamily. FAPy deformylase family. As to quaternary structure, homodimer. Fe(2+) serves as cofactor. The cofactor is Zn(2+).

The catalysed reaction is 2-amino-5-formylamino-6-(5-phospho-D-ribosylamino)pyrimidin-4(3H)-one + H2O = 2,5-diamino-6-(1-D-ribosylamino)pyrimidin-4(3H)-one 5'-phosphate + formate + H(+). Its pathway is cofactor biosynthesis; coenzyme F420 biosynthesis. It functions in the pathway cofactor biosynthesis; riboflavin biosynthesis. Functionally, catalyzes the hydrolysis of the formamide of 2-amino-5-formylamino-6-ribosylamino-4(3H)-pyrimidinone 5'-monophosphate (FAPy) to form 2,5-diamino-6-ribosylamino-4(3H)-pyrimidinone 5'-phosphate (APy). The protein is 2-amino-5-formylamino-6-ribosylaminopyrimidin-4(3H)-one 5'-monophosphate deformylase of Methanococcus aeolicus (strain ATCC BAA-1280 / DSM 17508 / OCM 812 / Nankai-3).